Reading from the N-terminus, the 1385-residue chain is DNA-directed RNA polymerase subunit beta' (1385 aa).

4 residues coordinate Zn(2+): Cys-75, Cys-77, Cys-90, and Cys-93. Asp-466, Asp-468, and Asp-470 together coordinate Mg(2+). 4 residues coordinate Zn(2+): Cys-809, Cys-883, Cys-890, and Cys-893.

This sequence belongs to the RNA polymerase beta' chain family. In terms of assembly, the RNAP catalytic core consists of 2 alpha, 1 beta, 1 beta' and 1 omega subunit. When a sigma factor is associated with the core the holoenzyme is formed, which can initiate transcription. Mg(2+) serves as cofactor. The cofactor is Zn(2+).

It carries out the reaction RNA(n) + a ribonucleoside 5'-triphosphate = RNA(n+1) + diphosphate. In terms of biological role, DNA-dependent RNA polymerase catalyzes the transcription of DNA into RNA using the four ribonucleoside triphosphates as substrates. The sequence is that of DNA-directed RNA polymerase subunit beta' from Nitratidesulfovibrio vulgaris (strain ATCC 29579 / DSM 644 / CCUG 34227 / NCIMB 8303 / VKM B-1760 / Hildenborough) (Desulfovibrio vulgaris).